Here is a 60-residue protein sequence, read N- to C-terminus: Ixodegrin-Ip (60 aa).

The N-terminal stretch at 1 to 21 (MNAAFIAALFILGALTLDAMA) is a signal peptide. The Cell attachment site signature appears at 49-51 (RGD).

The protein belongs to the ixodegrin family. Contains 3 disulfide bonds. As to expression, expressed in salivary glands.

The protein localises to the secreted. Its function is as follows. Tick salivary platelet aggregation inhibitor that plays an important part in the anti-hemostatic strategy of ticks. Inhibits platelet aggregation induced by ADP, thrombin and thromboxane A2 (TXA2). Blocks platelet adhesion to soluble collagen (most probably through the binding to alpha-2/beta-1 integrin (ITGA2/ITGB1)) and binds to purified glycoprotein IIb/IIIa (ITGA2B/ITGB3) in a dose-dependent manner. In vivo, reduces thrombus weight effectively in a rat arteriovenous shunt model and inhibits thrombosis in a carrageenan-induced mouse tail thrombosis model. The sequence is that of Ixodegrin-Ip from Ixodes pacificus (Western black-legged tick).